A 276-amino-acid chain; its full sequence is 3,4-dihydroxyphenylacetate 2,3-dioxygenase (276 aa).

It depends on Fe cation as a cofactor.

The catalysed reaction is 3,4-dihydroxyphenylacetate + O2 = 2-hydroxy-5-carboxymethylmuconate semialdehyde + H(+). It participates in aromatic compound metabolism; 4-hydroxyphenylacetate degradation; pyruvate and succinate semialdehyde from 4-hydroxyphenylacetate: step 2/7. In terms of biological role, transforms homoprotocatechuic acid (HPC) into 5-carboxymethyl-2-hydroxy-muconic semialdehyde (CHMS). The chain is 3,4-dihydroxyphenylacetate 2,3-dioxygenase (hpcB) from Escherichia coli.